A 479-amino-acid chain; its full sequence is Ammonium transporter Rh type C (479 aa).

Residues 1-9 lie on the Cytoplasmic side of the membrane; sequence MAWNTNLRW. Residues 10 to 30 form a helical membrane-spanning segment; that stretch reads RLPLTCLLLQVVMVILFGVFV. At 31–60 the chain is on the extracellular side; it reads RYDFEADAHWWSERTHKNLSDVENEFYYRY. Asn-48 carries N-linked (GlcNAc...) asparagine glycosylation. A helical membrane pass occupies residues 61–81; the sequence is PSFQDVHVMVFVGFGFLMTFL. Residues 82–85 are Cytoplasmic-facing; sequence QRYG. A helical membrane pass occupies residues 86–106; the sequence is FSAVGFNFLLAAFGIQWALLM. The Extracellular portion of the chain corresponds to 107–123; sequence QGWFHFLQGRYIVVGVE. Residues 124 to 144 form a helical membrane-spanning segment; sequence NLINADFCVASVCVAFGAVLG. Topologically, residues 145 to 148 are cytoplasmic; sequence KVSP. A helical membrane pass occupies residues 149-169; that stretch reads IQLLIMTFFQVTLFAVNEFIL. The Extracellular portion of the chain corresponds to 170–177; that stretch reads LNLLKVKD. The chain crosses the membrane as a helical span at residues 178 to 200; it reads AGGSMTIHTFGAYFGLTVTRILY. Over 201-218 the chain is Cytoplasmic; that stretch reads RRNLEQSKERQNSVYQSD. Residues 219-239 traverse the membrane as a helical segment; that stretch reads LFAMIGTLFLWMYWPSFNSAI. At 240 to 250 the chain is on the extracellular side; the sequence is SYHGDSQHRAA. Residues 251 to 271 form a helical membrane-spanning segment; the sequence is INTYCSLAACVLTSVAISSAL. The Cytoplasmic portion of the chain corresponds to 272-281; sequence HKKGKLDMVH. Residues 282–302 form a helical membrane-spanning segment; the sequence is IQNATLAGGVAVGTAAEMMLM. Residue Pro-303 is a topological domain, extracellular. Residues 304–324 traverse the membrane as a helical segment; it reads YGALIIGFVCGIISTLGFVYL. The Cytoplasmic segment spans residues 325–345; that stretch reads TPFLESRLHIQDTCGINNLHG. Residues 346–366 form a helical membrane-spanning segment; it reads IPGIIGGIVGAVTAASASLEV. Over 367–394 the chain is Extracellular; the sequence is YGKEGLVHSFDFQGFKGDWTARTQGKFQ. A helical transmembrane segment spans residues 395 to 415; sequence IYGLLVTLAMALMGGIIVGLI. Residues 416–479 lie on the Cytoplasmic side of the membrane; that stretch reads LRLPFWGQPS…PMASSVPLVP (64 aa).

The protein belongs to the ammonium transporter (TC 2.A.49) family. Rh subfamily. Homotrimer. N-glycosylated.

The protein resides in the cell membrane. It is found in the apical cell membrane. The enzyme catalyses NH4(+)(in) = NH4(+)(out). The catalysed reaction is methylamine(out) = methylamine(in). It carries out the reaction CO2(out) = CO2(in). Ammonium transporter involved in the maintenance of acid-base homeostasis. Transports ammonium and its related derivative methylammonium across the plasma membrane of epithelial cells likely contributing to renal transepithelial ammonia transport and ammonia metabolism. Postulated to primarily mediate an electroneutral bidirectional transport of NH3 ammonia species according to a mechanism that implies interaction of an NH4(+) ion with acidic residues of the pore entry followed by dissociation of NH4(+) into NH3 and H(+). As a result NH3 transits through the central pore and is protonated on the extracellular side reforming NH4(+). May act as a CO2 channel providing for renal acid secretion. This chain is Ammonium transporter Rh type C (RHCG), found in Pan troglodytes (Chimpanzee).